We begin with the raw amino-acid sequence, 465 residues long: Histidine--tRNA ligase (465 aa).

This sequence belongs to the class-II aminoacyl-tRNA synthetase family. Homodimer.

It is found in the cytoplasm. It catalyses the reaction tRNA(His) + L-histidine + ATP = L-histidyl-tRNA(His) + AMP + diphosphate + H(+). The polypeptide is Histidine--tRNA ligase (hisS) (Pelagibacter ubique (strain HTCC1062)).